The primary structure comprises 334 residues: Aspartate carbamoyltransferase catalytic subunit (334 aa).

Carbamoyl phosphate contacts are provided by arginine 71 and threonine 72. Residue lysine 99 participates in L-aspartate binding. 3 residues coordinate carbamoyl phosphate: arginine 121, histidine 151, and glutamine 154. L-aspartate contacts are provided by arginine 184 and arginine 239. Carbamoyl phosphate contacts are provided by glycine 280 and proline 281.

It belongs to the aspartate/ornithine carbamoyltransferase superfamily. ATCase family. In terms of assembly, heterododecamer (2C3:3R2) of six catalytic PyrB chains organized as two trimers (C3), and six regulatory PyrI chains organized as three dimers (R2).

It carries out the reaction carbamoyl phosphate + L-aspartate = N-carbamoyl-L-aspartate + phosphate + H(+). It participates in pyrimidine metabolism; UMP biosynthesis via de novo pathway; (S)-dihydroorotate from bicarbonate: step 2/3. Catalyzes the condensation of carbamoyl phosphate and aspartate to form carbamoyl aspartate and inorganic phosphate, the committed step in the de novo pyrimidine nucleotide biosynthesis pathway. In Pseudomonas fluorescens (strain ATCC BAA-477 / NRRL B-23932 / Pf-5), this protein is Aspartate carbamoyltransferase catalytic subunit.